A 166-amino-acid chain; its full sequence is S-phase kinase-associated protein 1 homolog (166 aa).

The tract at residues 105–166 is interaction with the F-box domain of F-box proteins; it reads ILAANYLDIK…ENKWAEEATS (62 aa).

This sequence belongs to the SKP1 family. Component of multiple SCF (SKP1-CUL1-F-box) E3 ubiquitin-protein ligase complexes formed of CUL1, SKP1, RBX1 and a variable F-box domain-containing protein as substrate-specific subunit.

It participates in protein modification; protein ubiquitination. Essential component of the SCF (SKP1-CUL1-F-box protein) ubiquitin ligase complex, which mediates the ubiquitination of proteins involved in cell cycle progression, signal transduction and transcription. In the SCF complex, serves as an adapter that links the F-box protein to CUL1. The functional specificity of the SCF complex depends on the F-box protein as substrate recognition component. Its association with the holoenzyme telomerase ribonucleoprotein complex suggests that it may play a role in turnover of holoenzyme telomerase complex components. The protein is S-phase kinase-associated protein 1 homolog of Tetrahymena thermophila (strain SB210).